The following is a 711-amino-acid chain: Double-stranded RNA-specific editase 1 (711 aa).

Residues 1-79 (MDIEDEENMS…RRKTPGPVLP (79 aa)) form a disordered region. Basic residues predominate over residues 63–73 (SKYRLKKRRKT). One can recognise a DRBM 1 domain in the interval 78-144 (LPKNALMQLN…AEKALRSFVQ (67 aa)). Interaction with substrate RNA stretches follow at residues 83-88 (LMQLNE) and 104-105 (VH). Ser149 is subject to Phosphoserine. Residues 176 to 220 (LFNGFETPDKSEPPFYVGSNGDDSFSSSGDVSLSASPVPASLTQP) are disordered. The span at 192-213 (VGSNGDDSFSSSGDVSLSASPV) shows a compositional bias: low complexity. Positions 231-298 (PSGKNPVMIL…AQSALATVFN (68 aa)) constitute a DRBM 2 domain. Interaction with substrate RNA regions lie at residues 237–242 (VMILNE) and His259. The 338-residue stretch at 370 to 707 (SVSTGTKCIN…VEKPTEQDQF (338 aa)) folds into the A to I editase domain. Residue His394 participates in Zn(2+) binding. Glu396 acts as the Proton donor in catalysis. 1D-myo-inositol hexakisphosphate is bound by residues Arg400 and Arg401. Residues Cys451 and Cys526 each contribute to the Zn(2+) site. 6 residues coordinate 1D-myo-inositol hexakisphosphate: Lys529, Arg532, Lys639, Lys672, Lys682, and Lys700.

In terms of assembly, homodimer. Homodimerization is essential for its catalytic activity. Can form heterodimers with isoform 5 of ADAR/ADAR1. 1D-myo-inositol hexakisphosphate serves as cofactor. Brain and peripheral tissues.

It is found in the nucleus. Its subcellular location is the nucleolus. The catalysed reaction is adenosine in double-stranded RNA + H2O + H(+) = inosine in double-stranded RNA + NH4(+). In terms of biological role, catalyzes the hydrolytic deamination of adenosine to inosine in double-stranded RNA (dsRNA) referred to as A-to-I RNA editing. This may affect gene expression and function in a number of ways that include mRNA translation by changing codons and hence the amino acid sequence of proteins; pre-mRNA splicing by altering splice site recognition sequences; RNA stability by changing sequences involved in nuclease recognition; genetic stability in the case of RNA virus genomes by changing sequences during viral RNA replication; and RNA structure-dependent activities such as microRNA production or targeting or protein-RNA interactions. Can edit both viral and cellular RNAs and can edit RNAs at multiple sites (hyper-editing) or at specific sites (site-specific editing). Its cellular RNA substrates include: bladder cancer-associated protein (BLCAP), neurotransmitter receptors for glutamate (GRIA2 and GRIK2) and serotonin (HTR2C), GABA receptor (GABRA3) and potassium voltage-gated channel (KCNA1). Site-specific RNA editing of transcripts encoding these proteins results in amino acid substitutions which consequently alter their functional activities. Edits GRIA2 at both the Q/R and R/G sites efficiently but converts the adenosine in hotspot1 much less efficiently. Can inhibit cell proliferation and migration and can stimulate exocytosis. The sequence is that of Double-stranded RNA-specific editase 1 (Adarb1) from Rattus norvegicus (Rat).